The primary structure comprises 371 residues: Putative glutamate--cysteine ligase 2 (371 aa).

This sequence belongs to the glutamate--cysteine ligase type 2 family. YbdK subfamily.

It carries out the reaction L-cysteine + L-glutamate + ATP = gamma-L-glutamyl-L-cysteine + ADP + phosphate + H(+). ATP-dependent carboxylate-amine ligase which exhibits weak glutamate--cysteine ligase activity. The protein is Putative glutamate--cysteine ligase 2 of Nitrosospira multiformis (strain ATCC 25196 / NCIMB 11849 / C 71).